Consider the following 99-residue polypeptide: Cell division topological specificity factor (99 aa).

Belongs to the MinE family.

In terms of biological role, prevents the cell division inhibition by proteins MinC and MinD at internal division sites while permitting inhibition at polar sites. This ensures cell division at the proper site by restricting the formation of a division septum at the midpoint of the long axis of the cell. The sequence is that of Cell division topological specificity factor from Tolumonas auensis (strain DSM 9187 / NBRC 110442 / TA 4).